The primary structure comprises 249 residues: MERLLIVNADDFGLSKGQNYGIIEACRNGIVTSTTALVNGQAIDHAVQLSRDEPSLAIGMHFVLTMGKPLTAMPGLTRDGVLGKWIWQLAEEDALPLEEITQELASQYLRFIELFGRKPTHLDSHHHVHMFPQIFPIVARFAAEEGIALRADRQMVFDLPVNLRTTQGFSSAFYGEEISESLFLQVLDDSSHRGERSLEVMCHPAFIDNTIRQSAYCFPRLTELDVLTSASLKYAIAERGYRLGSYLDV.

Residues histidine 61 and histidine 125 each coordinate Mg(2+).

It belongs to the YdjC deacetylase family. ChbG subfamily. Homodimer. Mg(2+) is required as a cofactor.

Its subcellular location is the cytoplasm. The catalysed reaction is N,N'-diacetylchitobiose + H2O = N-acetyl-beta-D-glucosaminyl-(1-&gt;4)-D-glucosamine + acetate. It catalyses the reaction diacetylchitobiose-6'-phosphate + H2O = N'-monoacetylchitobiose-6'-phosphate + acetate. It functions in the pathway glycan degradation; chitin degradation. Involved in the degradation of chitin. ChbG is essential for growth on the acetylated chitooligosaccharides chitobiose and chitotriose but is dispensable for growth on cellobiose and chitosan dimer, the deacetylated form of chitobiose. Deacetylation of chitobiose-6-P and chitotriose-6-P is necessary for both the activation of the chb promoter by the regulatory protein ChbR and the hydrolysis of phosphorylated beta-glucosides by the phospho-beta-glucosidase ChbF. Catalyzes the removal of only one acetyl group from chitobiose-6-P to yield monoacetylchitobiose-6-P, the inducer of ChbR and the substrate of ChbF. The polypeptide is Chitooligosaccharide deacetylase (Escherichia coli O7:K1 (strain IAI39 / ExPEC)).